The primary structure comprises 284 residues: Bifunctional protein FolD (284 aa).

NADP(+) is bound by residues 166 to 168 (GAS) and Ile-232.

Belongs to the tetrahydrofolate dehydrogenase/cyclohydrolase family. Homodimer.

It catalyses the reaction (6R)-5,10-methylene-5,6,7,8-tetrahydrofolate + NADP(+) = (6R)-5,10-methenyltetrahydrofolate + NADPH. The catalysed reaction is (6R)-5,10-methenyltetrahydrofolate + H2O = (6R)-10-formyltetrahydrofolate + H(+). It participates in one-carbon metabolism; tetrahydrofolate interconversion. Functionally, catalyzes the oxidation of 5,10-methylenetetrahydrofolate to 5,10-methenyltetrahydrofolate and then the hydrolysis of 5,10-methenyltetrahydrofolate to 10-formyltetrahydrofolate. The sequence is that of Bifunctional protein FolD from Pseudomonas aeruginosa (strain LESB58).